The following is a 57-amino-acid chain: MLSWVVTFLIIALIAGILGFGGLAGASVEIAKIIFFIAVILFVVSAVVGLLRGRTRV.

The next 2 helical transmembrane spans lie at 4–24 (WVVTFLIIALIAGILGFGGLA) and 30–50 (IAKIIFFIAVILFVVSAVVGL).

This sequence belongs to the UPF0391 family.

Its subcellular location is the cell membrane. This is UPF0391 membrane protein Nham_2738 from Nitrobacter hamburgensis (strain DSM 10229 / NCIMB 13809 / X14).